We begin with the raw amino-acid sequence, 460 residues long: MLO-like protein 9 (460 aa).

Residues 1-21 (MAGGGGGGGGEGPRQLDQTPT) lie on the Extracellular side of the membrane. Residues 22–42 (WAVSTVCGVIILISIILELII) form a helical membrane-spanning segment. Topologically, residues 43 to 67 (HKVGEVFERKKKKALFEALEKIKNE) are cytoplasmic. A helical transmembrane segment spans residues 68-88 (LMVLGFISLLLTFGQNYIASI). Topologically, residues 89–158 (CVPSRYGHAM…ISLNALHQVH (70 aa)) are extracellular. A helical membrane pass occupies residues 159–179 (IFIFFLAVFHVIYSAITMMLG). Over 180–289 (RAKIRGWKVW…KVVVGIRPEL (110 aa)) the chain is Cytoplasmic. Residues 290–310 (WAFVMLFLLFDVHGWYVTAVI) form a helical membrane-spanning segment. Topologically, residues 311–315 (TMIPP) are extracellular. The chain crosses the membrane as a helical span at residues 316–336 (LLTLAIGTKLQAIISYMALEI). Over 337-366 (QERHAVIQGMPVVNVSDQHFWFEKPDLVLH) the chain is Cytoplasmic. A helical transmembrane segment spans residues 367–387 (MIHFVLFQNAFEITYFFWIWY). The Extracellular portion of the chain corresponds to 388-398 (EFGLRSCFHHH). Residues 399–419 (FGLIIIRVCLGVGVQFLCSYI) form a helical membrane-spanning segment. The Cytoplasmic segment spans residues 420–460 (TLPLYALVTQMGSTMKRSVFDEQTSKALEQWHKKARKKNEK). A calmodulin-binding region spans residues 441–460 (EQTSKALEQWHKKARKKNEK).

This sequence belongs to the MLO family.

It localises to the membrane. Its function is as follows. May be involved in modulation of pathogen defense and leaf cell death. Activity seems to be regulated by Ca(2+)-dependent calmodulin binding and seems not to require heterotrimeric G proteins. The chain is MLO-like protein 9 (MLO9) from Arabidopsis thaliana (Mouse-ear cress).